The following is a 343-amino-acid chain: SUMO-activating enzyme subunit aos-1 (343 aa).

This sequence belongs to the ubiquitin-activating E1 family. In terms of assembly, heterodimer of aos-1 and uba-2.

It functions in the pathway protein modification; protein sumoylation. Its function is as follows. The dimeric enzyme acts as an E1 ligase for smo-1. It mediates ATP-dependent activation of smo-1 and formation of a thioester with a conserved cysteine residue on uba-2. This is SUMO-activating enzyme subunit aos-1 (aos-1) from Caenorhabditis elegans.